The sequence spans 156 residues: MLTHLDSQGRANMVDVTEKAVTAREAIAEARVRMLPDTLRMIVDGQHPKGDVFAVARIAGIQAAKKTSDLIPLCHPLMLTGVKVELAAEGEDVVHIVARCKLAGQTGVEMEALTAASVTALTIYDMCKAVDKGMVIEQVRLLEKTGGKSGHYKVEA.

Residues leucine 73–histidine 75 and methionine 110–glutamate 111 contribute to the substrate site. Residue aspartate 125 is part of the active site.

It belongs to the MoaC family. As to quaternary structure, homohexamer; trimer of dimers.

It carries out the reaction (8S)-3',8-cyclo-7,8-dihydroguanosine 5'-triphosphate = cyclic pyranopterin phosphate + diphosphate. Its pathway is cofactor biosynthesis; molybdopterin biosynthesis. Its function is as follows. Catalyzes the conversion of (8S)-3',8-cyclo-7,8-dihydroguanosine 5'-triphosphate to cyclic pyranopterin monophosphate (cPMP). In Pseudomonas entomophila (strain L48), this protein is Cyclic pyranopterin monophosphate synthase.